We begin with the raw amino-acid sequence, 323 residues long: Breast cancer metastasis-suppressor 1-like protein (323 aa).

The span at 1–15 (MPVHSREKKENNHDE) shows a compositional bias: basic and acidic residues. The disordered stretch occupies residues 1–56 (MPVHSREKKENNHDEMEVDYGENEGSTSEEEETESSSVSEEGDSSEMDDEDCERRR). Acidic residues predominate over residues 16 to 51 (MEVDYGENEGSTSEEEETESSSVSEEGDSSEMDDED). Coiled coils occupy residues 50–82 (EDCE…KERL) and 147–178 (EKLL…ITSE).

This sequence belongs to the BRMS1 family.

It localises to the nucleus. Its function is as follows. Involved in the histone deacetylase (HDAC1)-dependent transcriptional repression activity. The protein is Breast cancer metastasis-suppressor 1-like protein (BRMS1L) of Gallus gallus (Chicken).